The following is a 628-amino-acid chain: DNA-directed RNA polymerase subunit gamma (628 aa).

4 residues coordinate Zn(2+): Cys71, Cys73, Cys86, and Cys89. 3 residues coordinate Mg(2+): Asp467, Asp469, and Asp471.

This sequence belongs to the RNA polymerase beta' chain family. RpoC1 subfamily. In cyanobacteria the RNAP catalytic core is composed of 2 alpha, 1 beta, 1 beta', 1 gamma and 1 omega subunit. When a sigma factor is associated with the core the holoenzyme is formed, which can initiate transcription. Requires Mg(2+) as cofactor. It depends on Zn(2+) as a cofactor.

It catalyses the reaction RNA(n) + a ribonucleoside 5'-triphosphate = RNA(n+1) + diphosphate. Its function is as follows. DNA-dependent RNA polymerase catalyzes the transcription of DNA into RNA using the four ribonucleoside triphosphates as substrates. The polypeptide is DNA-directed RNA polymerase subunit gamma (Crocosphaera subtropica (strain ATCC 51142 / BH68) (Cyanothece sp. (strain ATCC 51142))).